A 239-amino-acid polypeptide reads, in one-letter code: Purine nucleoside phosphorylase DeoD-type (239 aa).

Residue histidine 5 coordinates a purine D-ribonucleoside. Phosphate is bound by residues glycine 21 and arginine 25. Lysine 27 is subject to N6-acetyllysine. Residues arginine 44 and 88–91 (RVGS) contribute to the phosphate site. A purine D-ribonucleoside is bound by residues 180–182 (EME) and 204–205 (SD). Catalysis depends on aspartate 205, which acts as the Proton donor.

Belongs to the PNP/UDP phosphorylase family. In terms of assembly, homohexamer; trimer of homodimers.

The enzyme catalyses a purine D-ribonucleoside + phosphate = a purine nucleobase + alpha-D-ribose 1-phosphate. The catalysed reaction is a purine 2'-deoxy-D-ribonucleoside + phosphate = a purine nucleobase + 2-deoxy-alpha-D-ribose 1-phosphate. Its function is as follows. Catalyzes the reversible phosphorolytic breakdown of the N-glycosidic bond in the beta-(deoxy)ribonucleoside molecules, with the formation of the corresponding free purine bases and pentose-1-phosphate. This is Purine nucleoside phosphorylase DeoD-type from Escherichia coli O8 (strain IAI1).